A 504-amino-acid polypeptide reads, in one-letter code: ATP synthase subunit alpha (504 aa).

170-177 (GDRQTGKT) serves as a coordination point for ATP.

The protein belongs to the ATPase alpha/beta chains family. In terms of assembly, F-type ATPases have 2 components, CF(1) - the catalytic core - and CF(0) - the membrane proton channel. CF(1) has five subunits: alpha(3), beta(3), gamma(1), delta(1), epsilon(1). CF(0) has three main subunits: a(1), b(2) and c(9-12). The alpha and beta chains form an alternating ring which encloses part of the gamma chain. CF(1) is attached to CF(0) by a central stalk formed by the gamma and epsilon chains, while a peripheral stalk is formed by the delta and b chains.

The protein resides in the cell membrane. It catalyses the reaction ATP + H2O + 4 H(+)(in) = ADP + phosphate + 5 H(+)(out). Produces ATP from ADP in the presence of a proton gradient across the membrane. The alpha chain is a regulatory subunit. The polypeptide is ATP synthase subunit alpha (Shouchella clausii (strain KSM-K16) (Alkalihalobacillus clausii)).